An 847-amino-acid polypeptide reads, in one-letter code: Guanine nucleotide exchange factor VAV3 (847 aa).

The 119-residue stretch at methionine 1–proline 119 folds into the Calponin-homology (CH) domain. A Phosphotyrosine modification is found at tyrosine 141. Positions isoleucine 192–valine 371 constitute a DH domain. The region spanning arginine 400 to serine 502 is the PH domain. Residues phenylalanine 513–cysteine 562 form a Phorbol-ester/DAG-type zinc finger. A sufficient for interaction with ROS1 region spans residues aspartate 560 to glutamate 847. Positions proline 592–cysteine 660 constitute an SH3 1 domain. Residues tryptophan 672–tyrosine 766 enclose the SH2 domain. One can recognise an SH3 2 domain in the interval lysine 788 to glutamate 847.

As to quaternary structure, interacts with the PH domain of APS. Interacts with ROS1; constitutive interaction that mediates VAV3 phosphorylation. Interacts (via SH2 domains) with the phosphorylated form of EPHA2. Post-translationally, phosphorylated. Phosphorylation can be mediated by ROS1. In osteoclasts, undergoes tyrosine phosphorylation in response to CSF1. Abundantly expressed in osteoclasts and mature osteoblasts. Also expressed in bone marrow macrophages (at protein level):.

Exchange factor for GTP-binding proteins RhoA, RhoG and, to a lesser extent, Rac1. Binds physically to the nucleotide-free states of those GTPases. Plays an important role in angiogenesis. Its recruitment by phosphorylated EPHA2 is critical for EFNA1-induced RAC1 GTPase activation and vascular endothelial cell migration and assembly. May be important for integrin-mediated signaling, at least in some cell types. In osteoclasts, along with SYK tyrosine kinase, required for signaling through integrin alpha-v/beta-1 (ITAGV-ITGB1), a crucial event for osteoclast proper cytoskeleton organization and function. This signaling pathway involves RAC1, but not RHO, activation. Necessary for proper wound healing. In the course of wound healing, required for the phagocytotic cup formation preceding macrophage phagocytosis of apoptotic neutrophils. Responsible for integrin beta-2-mediated macrophage adhesion and, to a lesser extent, contributes to beta-3-mediated adhesion. Does not affect integrin beta-1-mediated adhesion. This chain is Guanine nucleotide exchange factor VAV3 (Vav3), found in Mus musculus (Mouse).